The primary structure comprises 236 residues: MTRRYWNINLEEMMEAGVHFGHGTRKWNPKMAPYISAKRKGIHITNLTRTARFLSEACDLVFDAASRGKQFLIVGTKNKEADSVAWAAIRARCHYVNKKWLGGMLTNWSTTETRLHKFRDLRTEQKTGGLSRLPKRDAAMLKRQLSHLQTYLGGIKYMTGLPDIVIIVDQHEEYTALQECITLGIPTICLIDTNCDPDLADISIPANDDAISSIRLILNKLVFAICEGRSGYIRNP.

It belongs to the universal ribosomal protein uS2 family.

The protein localises to the plastid. It is found in the chloroplast. The polypeptide is Small ribosomal subunit protein uS2c (rps2) (Helianthus annuus (Common sunflower)).